The following is a 387-amino-acid chain: 1-deoxy-D-xylulose 5-phosphate reductoisomerase (387 aa).

Positions 10, 11, 12, 13, 36, 38, and 122 each coordinate NADPH. K123 provides a ligand contact to 1-deoxy-D-xylulose 5-phosphate. E124 lines the NADPH pocket. Residue D148 coordinates Mn(2+). The 1-deoxy-D-xylulose 5-phosphate site is built by S149, E150, S174, and H197. Residue E150 participates in Mn(2+) binding. G203 is an NADPH binding site. Residues S210, N215, K216, and E219 each contribute to the 1-deoxy-D-xylulose 5-phosphate site. E219 serves as a coordination point for Mn(2+).

This sequence belongs to the DXR family. The cofactor is Mg(2+). Mn(2+) serves as cofactor.

It catalyses the reaction 2-C-methyl-D-erythritol 4-phosphate + NADP(+) = 1-deoxy-D-xylulose 5-phosphate + NADPH + H(+). Its pathway is isoprenoid biosynthesis; isopentenyl diphosphate biosynthesis via DXP pathway; isopentenyl diphosphate from 1-deoxy-D-xylulose 5-phosphate: step 1/6. Catalyzes the NADPH-dependent rearrangement and reduction of 1-deoxy-D-xylulose-5-phosphate (DXP) to 2-C-methyl-D-erythritol 4-phosphate (MEP). This Chloroherpeton thalassium (strain ATCC 35110 / GB-78) protein is 1-deoxy-D-xylulose 5-phosphate reductoisomerase.